Here is a 177-residue protein sequence, read N- to C-terminus: Large ribosomal subunit protein uL6 (177 aa).

The residue at position 44 (Lys-44) is an N6-acetyllysine.

It belongs to the universal ribosomal protein uL6 family. In terms of assembly, part of the 50S ribosomal subunit.

This protein binds to the 23S rRNA, and is important in its secondary structure. It is located near the subunit interface in the base of the L7/L12 stalk, and near the tRNA binding site of the peptidyltransferase center. The protein is Large ribosomal subunit protein uL6 of Escherichia coli O139:H28 (strain E24377A / ETEC).